The following is a 544-amino-acid chain: ATP synthase subunit alpha (544 aa).

ATP is bound at residue 173–180 (GDRQTGKT). The disordered stretch occupies residues 513-544 (GSDGQIIGGGEPESDGEDVDVEQEQIVRQKRG). The segment covering 524 to 535 (PESDGEDVDVEQ) has biased composition (acidic residues).

Belongs to the ATPase alpha/beta chains family. In terms of assembly, F-type ATPases have 2 components, CF(1) - the catalytic core - and CF(0) - the membrane proton channel. CF(1) has five subunits: alpha(3), beta(3), gamma(1), delta(1), epsilon(1). CF(0) has three main subunits: a(1), b(2) and c(9-12). The alpha and beta chains form an alternating ring which encloses part of the gamma chain. CF(1) is attached to CF(0) by a central stalk formed by the gamma and epsilon chains, while a peripheral stalk is formed by the delta and b chains.

The protein localises to the cell membrane. The enzyme catalyses ATP + H2O + 4 H(+)(in) = ADP + phosphate + 5 H(+)(out). Its function is as follows. Produces ATP from ADP in the presence of a proton gradient across the membrane. The alpha chain is a regulatory subunit. The protein is ATP synthase subunit alpha of Beutenbergia cavernae (strain ATCC BAA-8 / DSM 12333 / CCUG 43141 / JCM 11478 / NBRC 16432 / NCIMB 13614 / HKI 0122).